The sequence spans 120 residues: Cell division protein FtsL (120 aa).

Residues 1-36 (MSNLAVKYKQQAQEEVQIQTPPQQMVQPKAKAKITR) are Cytoplasmic-facing. Residues 37 to 57 (IEKLLYVAFIGFLLYACVAFI) traverse the membrane as a helical segment. Over 58 to 120 (GNKAGLYQVN…INANNVKGLK (63 aa)) the chain is Extracellular.

It belongs to the FtsL family.

Its subcellular location is the cell membrane. Its function is as follows. Essential cell division protein. The protein is Cell division protein FtsL of Bacillus anthracis.